We begin with the raw amino-acid sequence, 430 residues long: V-type ATP synthase beta chain 1 (430 aa).

It belongs to the ATPase alpha/beta chains family.

Its function is as follows. Produces ATP from ADP in the presence of a proton gradient across the membrane. The V-type beta chain is a regulatory subunit. This Treponema pallidum (strain Nichols) protein is V-type ATP synthase beta chain 1 (atpB1).